Here is a 387-residue protein sequence, read N- to C-terminus: S-adenosylmethionine synthase (387 aa).

H17 provides a ligand contact to ATP. D19 provides a ligand contact to Mg(2+). E45 is a binding site for K(+). Residues E58 and Q101 each coordinate L-methionine. The interval Q101–R111 is flexible loop. ATP contacts are provided by residues D168 to K170, R234 to F235, D243, R249 to K250, A266, and K270. D243 is an L-methionine binding site. K274 contributes to the L-methionine binding site.

Belongs to the AdoMet synthase family. As to quaternary structure, homotetramer; dimer of dimers. The cofactor is Mg(2+). K(+) serves as cofactor.

The protein localises to the cytoplasm. The enzyme catalyses L-methionine + ATP + H2O = S-adenosyl-L-methionine + phosphate + diphosphate. The protein operates within amino-acid biosynthesis; S-adenosyl-L-methionine biosynthesis; S-adenosyl-L-methionine from L-methionine: step 1/1. Its function is as follows. Catalyzes the formation of S-adenosylmethionine (AdoMet) from methionine and ATP. The overall synthetic reaction is composed of two sequential steps, AdoMet formation and the subsequent tripolyphosphate hydrolysis which occurs prior to release of AdoMet from the enzyme. This chain is S-adenosylmethionine synthase, found in Bordetella bronchiseptica (strain ATCC BAA-588 / NCTC 13252 / RB50) (Alcaligenes bronchisepticus).